A 206-amino-acid polypeptide reads, in one-letter code: Erythropoietin (206 aa).

Positions 1–40 (MCEPAPPKPTQSAWHSFPECPALLLLLSLLLLPLGLPVLG) are cleaved as a signal peptide. Intrachain disulfides connect Cys-47-Cys-201 and Cys-69-Cys-73. An N-linked (GlcNAc...) asparagine glycan is attached at Asn-64. Asn-78 and Asn-123 each carry an N-linked (GlcNAc...) asparagine glycan.

This sequence belongs to the EPO/TPO family. In terms of tissue distribution, produced by kidney or liver of adult mammals and by liver of fetal or neonatal mammals.

Its subcellular location is the secreted. Hormone involved in the regulation of erythrocyte proliferation and differentiation and the maintenance of a physiological level of circulating erythrocyte mass. Binds to EPOR leading to EPOR dimerization and JAK2 activation thereby activating specific downstream effectors, including STAT1 and STAT3. This Canis lupus familiaris (Dog) protein is Erythropoietin (EPO).